A 407-amino-acid chain; its full sequence is S-adenosylmethionine synthase (407 aa).

His21 provides a ligand contact to ATP. Asp23 is a Mg(2+) binding site. A K(+)-binding site is contributed by Glu49. Residues Glu62 and Gln105 each contribute to the L-methionine site. Positions 105-115 (QSQEIGAGVDA) are flexible loop. Residues 179 to 181 (DGK), Asp259, 265 to 266 (RK), Ala282, and Lys286 each bind ATP. An L-methionine-binding site is contributed by Asp259. Lys290 contacts L-methionine.

It belongs to the AdoMet synthase family. In terms of assembly, homotetramer; dimer of dimers. Requires Mg(2+) as cofactor. The cofactor is K(+).

It is found in the cytoplasm. The catalysed reaction is L-methionine + ATP + H2O = S-adenosyl-L-methionine + phosphate + diphosphate. It functions in the pathway amino-acid biosynthesis; S-adenosyl-L-methionine biosynthesis; S-adenosyl-L-methionine from L-methionine: step 1/1. In terms of biological role, catalyzes the formation of S-adenosylmethionine (AdoMet) from methionine and ATP. The overall synthetic reaction is composed of two sequential steps, AdoMet formation and the subsequent tripolyphosphate hydrolysis which occurs prior to release of AdoMet from the enzyme. The chain is S-adenosylmethionine synthase from Corynebacterium aurimucosum (strain ATCC 700975 / DSM 44827 / CIP 107346 / CN-1) (Corynebacterium nigricans).